Consider the following 526-residue polypeptide: Amine oxidase [flavin-containing] A (526 aa).

At Met-1 the chain carries N-acetylmethionine. The Cytoplasmic segment spans residues 1–497; it reads MTDLEKPSIT…HTFLERNLPS (497 aa). At Ser-383 the chain carries Phosphoserine. S-8alpha-FAD cysteine is present on Cys-406. A helical; Anchor for type IV membrane protein membrane pass occupies residues 498-518; that stretch reads VPGLLKITGFSTSVALLCFVL. The Mitochondrial intermembrane segment spans residues 519 to 526; that stretch reads YKFKQPQS. The interval 520 to 522 is interaction with membrane phospholipid headgroups; the sequence is KFK.

It belongs to the flavin monoamine oxidase family. As to quaternary structure, monomer, homo- or heterodimer (containing two subunits of similar size). Each subunit contains a covalently bound flavin. Enzymatically active as monomer. It depends on FAD as a cofactor.

The protein resides in the mitochondrion outer membrane. The catalysed reaction is a secondary aliphatic amine + O2 + H2O = a primary amine + an aldehyde + H2O2. It carries out the reaction a primary methyl amine + O2 + H2O = an aldehyde + H2O2 + NH4(+). It catalyses the reaction serotonin + O2 + H2O = (5-hydroxyindol-3-yl)acetaldehyde + H2O2 + NH4(+). The enzyme catalyses (R)-adrenaline + O2 + H2O = (R)-3,4-dihydroxymandelaldehyde + methylamine + H2O2. The catalysed reaction is dopamine + O2 + H2O = 3,4-dihydroxyphenylacetaldehyde + H2O2 + NH4(+). It carries out the reaction tyramine + O2 + H2O = (4-hydroxyphenyl)acetaldehyde + H2O2 + NH4(+). It catalyses the reaction (R)-noradrenaline + O2 + H2O = (R)-3,4-dihydroxymandelaldehyde + H2O2 + NH4(+). The enzyme catalyses kynuramine + O2 + H2O = 3-(2-aminophenyl)-3-oxopropanal + H2O2 + NH4(+). The catalysed reaction is tryptamine + O2 + H2O = indole-3-acetaldehyde + H2O2 + NH4(+). It carries out the reaction 2-phenylethylamine + O2 + H2O = 2-phenylacetaldehyde + H2O2 + NH4(+). Functionally, catalyzes the oxidative deamination of biogenic and xenobiotic amines and has important functions in the metabolism of neuroactive and vasoactive amines in the central nervous system and peripheral tissues. Preferentially oxidizes serotonin. Also catalyzes the oxidative deamination of kynuramine to 3-(2-aminophenyl)-3-oxopropanal that can spontaneously condense to 4-hydroxyquinoline. In Mus musculus (Mouse), this protein is Amine oxidase [flavin-containing] A.